Consider the following 116-residue polypeptide: U16-barytoxin-Tl1a (116 aa).

An N-terminal signal peptide occupies residues 1–20; it reads MKTIIVFLSLLVLATKFGDA. Positions 21–74 are excised as a propeptide; sequence KEGVNQEQKKEVTQNEFRVEYLNEMAAMSLLQQLEAIESALFEKEAGRNSRQKR. Disulfide bonds link cysteine 75-cysteine 90, cysteine 82-cysteine 95, and cysteine 89-cysteine 110.

Belongs to the neurotoxin 14 (magi-1) family. 06 (ICK-Trit) subfamily. In terms of tissue distribution, expressed by the venom gland.

It localises to the secreted. Ion channel inhibitor. In Trittame loki (Brush-footed trapdoor spider), this protein is U16-barytoxin-Tl1a.